The primary structure comprises 121 residues: Small ribosomal subunit protein uS13 (121 aa).

The interval 92-121 is disordered; that stretch reads HKAGLPVRGQKTHSNARTRKGPRLTKIKKR. Residues 101–121 show a composition bias toward basic residues; the sequence is QKTHSNARTRKGPRLTKIKKR.

The protein belongs to the universal ribosomal protein uS13 family. In terms of assembly, part of the 30S ribosomal subunit. Forms a loose heterodimer with protein S19. Forms two bridges to the 50S subunit in the 70S ribosome.

Functionally, located at the top of the head of the 30S subunit, it contacts several helices of the 16S rRNA. In the 70S ribosome it contacts the 23S rRNA (bridge B1a) and protein L5 of the 50S subunit (bridge B1b), connecting the 2 subunits; these bridges are implicated in subunit movement. Contacts the tRNAs in the A and P-sites. The polypeptide is Small ribosomal subunit protein uS13 (Petrotoga mobilis (strain DSM 10674 / SJ95)).